Reading from the N-terminus, the 859-residue chain is Suppressor protein MPT5 (859 aa).

The disordered stretch occupies residues 85–108; that stretch reads MNNTSTSNSANSFSPNPNAASNST. Low complexity predominate over residues 86–108; it reads NNTSTSNSANSFSPNPNAASNST. One can recognise a PUM-HD domain in the interval 188 to 596; it reads DNSSFGLSSS…KIKLKVKAYA (409 aa). Pumilio repeat units follow at residues 209–247, 248–283, 284–320, 325–362, 363–400, 401–438, 439–474, and 503–539; these read PLRD…LMYE, QIKP…LLIQ, TIYP…LIIK, EFTS…FIID, AIVE…KISV, KIVQ…ELFN, RLSN…FIVN, and DIFT…AYNK. The interval 620-658 is disordered; it reads TINNENKNPHNKNSHNHNHNHNHNHAHNNNNNNNQKSHT. A compositionally biased stretch (basic residues) spans 628-645; sequence PHNKNSHNHNHNHNHNHA. A phosphoserine mark is found at serine 662, serine 834, and serine 838.

The protein resides in the cytoplasm. Functionally, RNA-binding protein involved in post-transcriptional regulation. Negatively regulates expression of HO by binding to the 3'-UTR of HO mRNA. Predominantly binds to mRNAs encoding chromatin modifiers and spindle pole body components. Recognizes and binds to 5'-TGTAA[CT]A[AT]TA-3' in the 3'-UTR of target mRNAs. Multicopy suppressor of POP2 mutation. Required for high temperature growth. In Saccharomyces cerevisiae (strain ATCC 204508 / S288c) (Baker's yeast), this protein is Suppressor protein MPT5 (MPT5).